A 173-amino-acid polypeptide reads, in one-letter code: Large ribosomal subunit protein uL10 (173 aa).

This sequence belongs to the universal ribosomal protein uL10 family. Part of the ribosomal stalk of the 50S ribosomal subunit. The N-terminus interacts with L11 and the large rRNA to form the base of the stalk. The C-terminus forms an elongated spine to which L12 dimers bind in a sequential fashion forming a multimeric L10(L12)X complex.

Functionally, forms part of the ribosomal stalk, playing a central role in the interaction of the ribosome with GTP-bound translation factors. The polypeptide is Large ribosomal subunit protein uL10 (Desulfatibacillum aliphaticivorans).